Consider the following 160-residue polypeptide: S-protein homolog 13 (160 aa).

A signal peptide spans 1-27 (MGRDLGWCFFVATVLLAAVLLPAPTIA).

Belongs to the plant self-incompatibility (S1) protein family.

Its subcellular location is the secreted. The polypeptide is S-protein homolog 13 (Arabidopsis thaliana (Mouse-ear cress)).